We begin with the raw amino-acid sequence, 339 residues long: 3-isopropylmalate dehydrogenase (339 aa).

The substrate site is built by Arg87, Arg97, Arg124, and Asp214. Mg(2+)-binding residues include Asp214, Asp238, and Asp242. 274 to 286 contacts NAD(+); that stretch reads GSAPDIAGQGIAD.

The protein belongs to the isocitrate and isopropylmalate dehydrogenases family. LeuB type 2 subfamily. In terms of assembly, homodimer. Mg(2+) serves as cofactor. Mn(2+) is required as a cofactor.

Its subcellular location is the cytoplasm. It carries out the reaction (2R,3S)-3-isopropylmalate + NAD(+) = 4-methyl-2-oxopentanoate + CO2 + NADH. The protein operates within amino-acid biosynthesis; L-leucine biosynthesis; L-leucine from 3-methyl-2-oxobutanoate: step 3/4. Its function is as follows. Catalyzes the oxidation of 3-carboxy-2-hydroxy-4-methylpentanoate (3-isopropylmalate) to 3-carboxy-4-methyl-2-oxopentanoate. The product decarboxylates to 4-methyl-2 oxopentanoate. This Mycobacterium marinum (strain ATCC BAA-535 / M) protein is 3-isopropylmalate dehydrogenase.